We begin with the raw amino-acid sequence, 259 residues long: 3-methyl-2-oxobutanoate hydroxymethyltransferase (259 aa).

Positions 44 and 83 each coordinate Mg(2+). 3-methyl-2-oxobutanoate contacts are provided by residues 44–45 (DS), aspartate 83, and lysine 112. Position 114 (glutamate 114) interacts with Mg(2+). The active-site Proton acceptor is glutamate 177.

The protein belongs to the PanB family. Homodecamer; pentamer of dimers. It depends on Mg(2+) as a cofactor.

The protein localises to the cytoplasm. The enzyme catalyses 3-methyl-2-oxobutanoate + (6R)-5,10-methylene-5,6,7,8-tetrahydrofolate + H2O = 2-dehydropantoate + (6S)-5,6,7,8-tetrahydrofolate. Its pathway is cofactor biosynthesis; (R)-pantothenate biosynthesis; (R)-pantoate from 3-methyl-2-oxobutanoate: step 1/2. Its function is as follows. Catalyzes the reversible reaction in which hydroxymethyl group from 5,10-methylenetetrahydrofolate is transferred onto alpha-ketoisovalerate to form ketopantoate. The protein is 3-methyl-2-oxobutanoate hydroxymethyltransferase of Nitratiruptor sp. (strain SB155-2).